We begin with the raw amino-acid sequence, 332 residues long: Holliday junction branch migration complex subunit RuvB (332 aa).

The large ATPase domain (RuvB-L) stretch occupies residues 1–181; it reads MTRFLDSDAM…FGITGHMEYY (181 aa). Residues L20, R21, G62, K65, T66, T67, 128-130, R171, Y181, and R218 contribute to the ATP site; that span reads EDF. Residue T66 coordinates Mg(2+). Residues 182–252 form a small ATPAse domain (RuvB-S) region; that stretch reads EENDLTEIIE…ITDKALTMLD (71 aa). The head domain (RuvB-H) stretch occupies residues 255–332; sequence HEGLDYVDQK…EHLGYQRFDK (78 aa). Positions 291, 310, 312, and 315 each coordinate DNA.

The protein belongs to the RuvB family. Homohexamer. Forms an RuvA(8)-RuvB(12)-Holliday junction (HJ) complex. HJ DNA is sandwiched between 2 RuvA tetramers; dsDNA enters through RuvA and exits via RuvB. An RuvB hexamer assembles on each DNA strand where it exits the tetramer. Each RuvB hexamer is contacted by two RuvA subunits (via domain III) on 2 adjacent RuvB subunits; this complex drives branch migration. In the full resolvosome a probable DNA-RuvA(4)-RuvB(12)-RuvC(2) complex forms which resolves the HJ.

Its subcellular location is the cytoplasm. It carries out the reaction ATP + H2O = ADP + phosphate + H(+). The RuvA-RuvB-RuvC complex processes Holliday junction (HJ) DNA during genetic recombination and DNA repair, while the RuvA-RuvB complex plays an important role in the rescue of blocked DNA replication forks via replication fork reversal (RFR). RuvA specifically binds to HJ cruciform DNA, conferring on it an open structure. The RuvB hexamer acts as an ATP-dependent pump, pulling dsDNA into and through the RuvAB complex. RuvB forms 2 homohexamers on either side of HJ DNA bound by 1 or 2 RuvA tetramers; 4 subunits per hexamer contact DNA at a time. Coordinated motions by a converter formed by DNA-disengaged RuvB subunits stimulates ATP hydrolysis and nucleotide exchange. Immobilization of the converter enables RuvB to convert the ATP-contained energy into a lever motion, pulling 2 nucleotides of DNA out of the RuvA tetramer per ATP hydrolyzed, thus driving DNA branch migration. The RuvB motors rotate together with the DNA substrate, which together with the progressing nucleotide cycle form the mechanistic basis for DNA recombination by continuous HJ branch migration. Branch migration allows RuvC to scan DNA until it finds its consensus sequence, where it cleaves and resolves cruciform DNA. This Streptococcus agalactiae serotype V (strain ATCC BAA-611 / 2603 V/R) protein is Holliday junction branch migration complex subunit RuvB.